We begin with the raw amino-acid sequence, 232 residues long: Large ribosomal subunit protein uL10c (232 aa).

The transit peptide at 1-52 directs the protein to the chloroplast; sequence MESTLFLSKPLPTTIKTTTHSLSSVYPNPFKPNNLTFPRTTHKHPTTTTITA.

This sequence belongs to the universal ribosomal protein uL10 family. As to quaternary structure, component of the chloroplast large ribosomal subunit (LSU). Mature 70S chloroplast ribosomes of higher plants consist of a small (30S) and a large (50S) subunit. The 30S small subunit contains 1 molecule of ribosomal RNA (16S rRNA) and 24 different proteins. The 50S large subunit contains 3 rRNA molecules (23S, 5S and 4.5S rRNA) and 33 different proteins.

It localises to the plastid. Its subcellular location is the chloroplast. Component of the chloroplast ribosome (chloro-ribosome), a dedicated translation machinery responsible for the synthesis of chloroplast genome-encoded proteins, including proteins of the transcription and translation machinery and components of the photosynthetic apparatus. The polypeptide is Large ribosomal subunit protein uL10c (RPL10) (Spinacia oleracea (Spinach)).